Reading from the N-terminus, the 193-residue chain is MRLCDRDIEAWLDDGRLVITPRPPTERISGATVDVRLGNQFRVFRGHTAPFIDLSGPKDEVSAALDRVMSDEINLPEGEAFFLHPGELALAVTLESVTLPDDLVGWLDGRSSLARLGLMVHVTAHRIDPGWQGRIVLEFYNSGKLPLALRPGMMIGALSFEPLSGPAARPYNRRQDAKYKDQQGAVASRIDKD.

Residues 110-115, Asp-128, 136-138, Tyr-171, Lys-178, and Gln-182 each bind dCTP; these read RSSLAR and VLE. Glu-138 serves as the catalytic Proton donor/acceptor. The tract at residues 169–193 is disordered; that stretch reads RPYNRRQDAKYKDQQGAVASRIDKD.

It belongs to the dCTP deaminase family. Homotrimer.

The enzyme catalyses dCTP + H2O + H(+) = dUTP + NH4(+). It functions in the pathway pyrimidine metabolism; dUMP biosynthesis; dUMP from dCTP (dUTP route): step 1/2. Its function is as follows. Catalyzes the deamination of dCTP to dUTP. The polypeptide is dCTP deaminase (Pectobacterium carotovorum subsp. carotovorum (strain PC1)).